The sequence spans 789 residues: Glycerol-3-phosphate acyltransferase (789 aa).

Residues 276-281 (HRSYID) carry the HXXXXD motif motif.

This sequence belongs to the GPAT/DAPAT family.

The protein localises to the cell membrane. It catalyses the reaction sn-glycerol 3-phosphate + an acyl-CoA = a 1-acyl-sn-glycero-3-phosphate + CoA. It participates in phospholipid metabolism; CDP-diacylglycerol biosynthesis; CDP-diacylglycerol from sn-glycerol 3-phosphate: step 1/3. This is Glycerol-3-phosphate acyltransferase from Mycobacterium bovis (strain ATCC BAA-935 / AF2122/97).